The sequence spans 206 residues: MLSAQLEAYLAEINLPATAEQKKQLLDFVGMLNKWNKAYNLTSVRDPEAMLVRHIMDSLVVSPHLQGERFIDVGTGPGLPGIPLAIMNPDKTFVLLDSLGKRIRFQKQVAFELGIHNISSIESRVEAYQPEQKFDGVLSRAFASIHDMLTWCHHLPAEHGQFYALKGQLSDEEMQQIPAGFVVTETIELKVPRLDEQRHLLKIIKE.

Residues Gly-74, Leu-79, 125 to 126 (VE), and Arg-140 each bind S-adenosyl-L-methionine.

Belongs to the methyltransferase superfamily. RNA methyltransferase RsmG family.

It localises to the cytoplasm. It catalyses the reaction guanosine(527) in 16S rRNA + S-adenosyl-L-methionine = N(7)-methylguanosine(527) in 16S rRNA + S-adenosyl-L-homocysteine. Functionally, specifically methylates the N7 position of guanine in position 527 of 16S rRNA. This Shewanella sp. (strain MR-4) protein is Ribosomal RNA small subunit methyltransferase G.